The following is a 1125-amino-acid chain: Protein efr-3 (1125 aa).

Disordered stretches follow at residues 240 to 261, 471 to 493, 788 to 819, and 845 to 1093; these read RTSN…PNPI, RPSR…NGAA, TSPP…KDET, and QAGS…LGEK. The span at 242–252 shows a compositional bias: polar residues; sequence SNATAQPSETT. Residues 788–798 show a composition bias toward low complexity; it reads TSPPTSPTTSP. Residues 845-854 are compositionally biased toward polar residues; that stretch reads QAGSSQTASL. Residues 855–877 show a composition bias toward low complexity; the sequence is NGTNGTHRNTVNNNNRLGVNGVT. Composition is skewed to polar residues over residues 878–896, 975–1011, and 1046–1071; these read SPNG…TGPN, LSFN…TQQL, and SRTT…TSSK.

This sequence belongs to the EFR3 family.

This is Protein efr-3 (efr-3) from Neurospora crassa (strain ATCC 24698 / 74-OR23-1A / CBS 708.71 / DSM 1257 / FGSC 987).